Here is a 143-residue protein sequence, read N- to C-terminus: Putative transcriptional regulatory protein PH0763 (143 aa).

This sequence belongs to the Tfx family.

Functionally, putative transcriptional regulator. This chain is Putative transcriptional regulatory protein PH0763, found in Pyrococcus horikoshii (strain ATCC 700860 / DSM 12428 / JCM 9974 / NBRC 100139 / OT-3).